The following is a 259-amino-acid chain: MRVLVSNDDGVDAPGIQILAEALRHAGHEVMVVAPDRDRSGASNSLTLDVPIRTRRVDAQTCAVAGTPTDCVHLALTGMLDYDPDIVVSGINNSANLGDDVIYSGTVSAAMEGRFLGLPAVAVSLVTHNHQAHHYDTAARAAVEIVARLKADPLPADTILNVNVPDLAWSDVLGFEVTRLGNRHRSEPCVPQRDPRGRTVYWIGPAGPEQDAGAGTDFHAVRTGHISITPIHVDLTRYQALDTVAGWVGGLTAALDGPA.

Positions 8, 9, 40, and 92 each coordinate a divalent metal cation.

It belongs to the SurE nucleotidase family. Requires a divalent metal cation as cofactor.

Its subcellular location is the cytoplasm. The enzyme catalyses a ribonucleoside 5'-phosphate + H2O = a ribonucleoside + phosphate. Nucleotidase that shows phosphatase activity on nucleoside 5'-monophosphates. The polypeptide is 5'-nucleotidase SurE (Xanthomonas euvesicatoria pv. vesicatoria (strain 85-10) (Xanthomonas campestris pv. vesicatoria)).